We begin with the raw amino-acid sequence, 230 residues long: Cytochrome c oxidase subunit 2 (230 aa).

Residues 1-14 (MAHPTQLGFQDAAS) lie on the Mitochondrial intermembrane side of the membrane. A helical membrane pass occupies residues 15–45 (PVMEELLHFHDHALMIVFLISTLVLYIIIAM). Over 46–59 (VSTKLTNKYILDSQ) the chain is Mitochondrial matrix. The helical transmembrane segment at 60-87 (EIEIVWTILPAVILVLIALPSLRILYLM) threads the bilayer. Over 88–230 (DEINDPHLTI…NWSSLMLEDA (143 aa)) the chain is Mitochondrial intermembrane. Residues H161, C196, E198, C200, H204, and M207 each coordinate Cu cation. Residue E198 coordinates Mg(2+).

This sequence belongs to the cytochrome c oxidase subunit 2 family. In terms of assembly, component of the cytochrome c oxidase (complex IV, CIV), a multisubunit enzyme composed of 14 subunits. The complex is composed of a catalytic core of 3 subunits MT-CO1, MT-CO2 and MT-CO3, encoded in the mitochondrial DNA, and 11 supernumerary subunits COX4I, COX5A, COX5B, COX6A, COX6B, COX6C, COX7A, COX7B, COX7C, COX8 and NDUFA4, which are encoded in the nuclear genome. The complex exists as a monomer or a dimer and forms supercomplexes (SCs) in the inner mitochondrial membrane with NADH-ubiquinone oxidoreductase (complex I, CI) and ubiquinol-cytochrome c oxidoreductase (cytochrome b-c1 complex, complex III, CIII), resulting in different assemblies (supercomplex SCI(1)III(2)IV(1) and megacomplex MCI(2)III(2)IV(2)). Found in a complex with TMEM177, COA6, COX18, COX20, SCO1 and SCO2. Interacts with TMEM177 in a COX20-dependent manner. Interacts with COX20. Interacts with COX16. Requires Cu cation as cofactor.

It localises to the mitochondrion inner membrane. It carries out the reaction 4 Fe(II)-[cytochrome c] + O2 + 8 H(+)(in) = 4 Fe(III)-[cytochrome c] + 2 H2O + 4 H(+)(out). Its function is as follows. Component of the cytochrome c oxidase, the last enzyme in the mitochondrial electron transport chain which drives oxidative phosphorylation. The respiratory chain contains 3 multisubunit complexes succinate dehydrogenase (complex II, CII), ubiquinol-cytochrome c oxidoreductase (cytochrome b-c1 complex, complex III, CIII) and cytochrome c oxidase (complex IV, CIV), that cooperate to transfer electrons derived from NADH and succinate to molecular oxygen, creating an electrochemical gradient over the inner membrane that drives transmembrane transport and the ATP synthase. Cytochrome c oxidase is the component of the respiratory chain that catalyzes the reduction of oxygen to water. Electrons originating from reduced cytochrome c in the intermembrane space (IMS) are transferred via the dinuclear copper A center (CU(A)) of subunit 2 and heme A of subunit 1 to the active site in subunit 1, a binuclear center (BNC) formed by heme A3 and copper B (CU(B)). The BNC reduces molecular oxygen to 2 water molecules using 4 electrons from cytochrome c in the IMS and 4 protons from the mitochondrial matrix. The chain is Cytochrome c oxidase subunit 2 (mt-co2) from Carassius auratus (Goldfish).